The following is a 286-amino-acid chain: MATRVLHSSCSGLYRAAGPARGKGHATAVIRSLSASHNRPREDSWFKSLFVRKVDPRKDAHSHLLAKKEDNNLYKIQFHNVKPECLEAYNKLCEDVLTNIHTDKAYPCELVGTWNTWYGEQDQAVHLWRYRGGYPALTEVMSKLKNNKEFLEYRSERGKMLLSRRNQLLLEFSFWNEPVPRDGPNIYELRSYQLRPGTMIEWGNYWARAIGYRQHNREAVGGFFSQIGDLYMVHHLWAYKDLQSREDTRNAAWQHEGWDEVVYYTVPLIQHMESRIMIPLKNSPLK.

Residues 1 to 40 (MATRVLHSSCSGLYRAAGPARGKGHATAVIRSLSASHNRP) constitute a mitochondrion transit peptide.

Belongs to the NipSnap family.

It is found in the mitochondrion matrix. In terms of biological role, protein involved in mitophagy. Accumulates on the mitochondria surface in response to mitochondrial depolarization and acts as a 'eat me' signal by recruiting proteins involved in selective autophagy. The protein is Protein NipSnap homolog 2 (nipsnap2) of Danio rerio (Zebrafish).